A 331-amino-acid chain; its full sequence is Ketol-acid reductoisomerase (NADP(+)) (331 aa).

A KARI N-terminal Rossmann domain is found at 2–181 (TKVYYEDAVK…GATRAGVIET (180 aa)). NADP(+) is bound by residues 25 to 28 (YGSQ), Arg-48, Ser-52, and 82 to 85 (DETQ). The active site involves His-107. Residue Gly-133 participates in NADP(+) binding. The KARI C-terminal knotted domain maps to 182–327 (TFKEETETDL…AELREMMPFV (146 aa)). 4 residues coordinate Mg(2+): Asp-190, Glu-194, Glu-226, and Glu-230. Ser-251 is a substrate binding site.

It belongs to the ketol-acid reductoisomerase family. Requires Mg(2+) as cofactor.

It carries out the reaction (2R)-2,3-dihydroxy-3-methylbutanoate + NADP(+) = (2S)-2-acetolactate + NADPH + H(+). The catalysed reaction is (2R,3R)-2,3-dihydroxy-3-methylpentanoate + NADP(+) = (S)-2-ethyl-2-hydroxy-3-oxobutanoate + NADPH + H(+). It participates in amino-acid biosynthesis; L-isoleucine biosynthesis; L-isoleucine from 2-oxobutanoate: step 2/4. The protein operates within amino-acid biosynthesis; L-valine biosynthesis; L-valine from pyruvate: step 2/4. Involved in the biosynthesis of branched-chain amino acids (BCAA). Catalyzes an alkyl-migration followed by a ketol-acid reduction of (S)-2-acetolactate (S2AL) to yield (R)-2,3-dihydroxy-isovalerate. In the isomerase reaction, S2AL is rearranged via a Mg-dependent methyl migration to produce 3-hydroxy-3-methyl-2-ketobutyrate (HMKB). In the reductase reaction, this 2-ketoacid undergoes a metal-dependent reduction by NADPH to yield (R)-2,3-dihydroxy-isovalerate. The chain is Ketol-acid reductoisomerase (NADP(+)) from Listeria monocytogenes serovar 1/2a (strain ATCC BAA-679 / EGD-e).